Consider the following 552-residue polypeptide: CTP synthase (552 aa).

An amidoligase domain region spans residues 1-270 (MTKYVFVTGG…DRIICEELKL (270 aa)). S13 lines the CTP pocket. Position 13 (S13) interacts with UTP. ATP is bound by residues 14–19 (SLGKGI) and D71. Mg(2+) contacts are provided by D71 and E144. CTP is bound by residues 151 to 153 (DIE), 191 to 196 (KTKPTQ), and K227. Residues 191–196 (KTKPTQ) and K227 contribute to the UTP site. Positions 295 to 547 (TIGMVGKYVD…VEAALANKQA (253 aa)) constitute a Glutamine amidotransferase type-1 domain. G356 provides a ligand contact to L-glutamine. C383 serves as the catalytic Nucleophile; for glutamine hydrolysis. L-glutamine is bound by residues 384–387 (LGMQ), E407, and R473. Active-site residues include H520 and E522.

This sequence belongs to the CTP synthase family. Homotetramer.

It catalyses the reaction UTP + L-glutamine + ATP + H2O = CTP + L-glutamate + ADP + phosphate + 2 H(+). It carries out the reaction L-glutamine + H2O = L-glutamate + NH4(+). The enzyme catalyses UTP + NH4(+) + ATP = CTP + ADP + phosphate + 2 H(+). The protein operates within pyrimidine metabolism; CTP biosynthesis via de novo pathway; CTP from UDP: step 2/2. Its activity is regulated as follows. Allosterically activated by GTP, when glutamine is the substrate; GTP has no effect on the reaction when ammonia is the substrate. The allosteric effector GTP functions by stabilizing the protein conformation that binds the tetrahedral intermediate(s) formed during glutamine hydrolysis. Inhibited by the product CTP, via allosteric rather than competitive inhibition. Functionally, catalyzes the ATP-dependent amination of UTP to CTP with either L-glutamine or ammonia as the source of nitrogen. Regulates intracellular CTP levels through interactions with the four ribonucleotide triphosphates. The polypeptide is CTP synthase (Burkholderia cenocepacia (strain ATCC BAA-245 / DSM 16553 / LMG 16656 / NCTC 13227 / J2315 / CF5610) (Burkholderia cepacia (strain J2315))).